A 175-amino-acid chain; its full sequence is Shikimate kinase (175 aa).

Glycine 14 to threonine 19 is a binding site for ATP. Residue serine 18 participates in Mg(2+) binding. Substrate-binding residues include aspartate 36, arginine 60, and glycine 82. Residue arginine 120 participates in ATP binding. Residue arginine 140 participates in substrate binding. Residue glutamine 157 coordinates ATP.

It belongs to the shikimate kinase family. Monomer. Requires Mg(2+) as cofactor.

It is found in the cytoplasm. The enzyme catalyses shikimate + ATP = 3-phosphoshikimate + ADP + H(+). It functions in the pathway metabolic intermediate biosynthesis; chorismate biosynthesis; chorismate from D-erythrose 4-phosphate and phosphoenolpyruvate: step 5/7. Catalyzes the specific phosphorylation of the 3-hydroxyl group of shikimic acid using ATP as a cosubstrate. The chain is Shikimate kinase from Pasteurella multocida (strain Pm70).